The chain runs to 876 residues: Monofunctional isopimaradiene synthase, chloroplastic (876 aa).

A chloroplast-targeting transit peptide spans 1–64 (MAMPSYSSLS…YLRLGSRKII (64 aa)). Positions 628, 632, 772, 776, and 780 each coordinate Mg(2+). The DDXXD motif signature appears at 628 to 632 (DDLYD).

It belongs to the terpene synthase family. Tpsd subfamily. It depends on Mg(2+) as a cofactor.

The protein localises to the plastid. Its subcellular location is the chloroplast. The enzyme catalyses (+)-copalyl diphosphate = isopimara-7,15-diene + diphosphate. Its pathway is terpene metabolism; oleoresin biosynthesis. Its function is as follows. Involved in defensive oleoresin formation in conifers in response to insect attack or other injury. Involved in diterpene (C20) olefins biosynthesis. Monofunctional enzyme lacking the DXDD motif in the class II active site relevant for the cyclization of geranylgeranyl diphosphate (GGPP). Requires (+)-copalyl diphosphate ((+)-CPP) as substrate, but no activity with GGPP or ent-CPP. Isopimaradiene is the major products of the enzyme followed by sandaracopimaradiene. In Pinus banksiana (Jack pine), this protein is Monofunctional isopimaradiene synthase, chloroplastic.